A 119-amino-acid chain; its full sequence is Integration host factor subunit alpha (119 aa).

A disordered region spans residues 96-119; it reads INGQQANGKMNGESAPSEFSAETE.

It belongs to the bacterial histone-like protein family. In terms of assembly, heterodimer of an alpha and a beta chain.

Functionally, this protein is one of the two subunits of integration host factor, a specific DNA-binding protein that functions in genetic recombination as well as in transcriptional and translational control. The sequence is that of Integration host factor subunit alpha from Bradyrhizobium sp. (strain ORS 278).